A 440-amino-acid polypeptide reads, in one-letter code: D-serine dehydratase (440 aa).

At Lys116 the chain carries N6-(pyridoxal phosphate)lysine.

The protein belongs to the serine/threonine dehydratase family. DsdA subfamily. As to quaternary structure, monomer. The cofactor is pyridoxal 5'-phosphate.

It catalyses the reaction D-serine = pyruvate + NH4(+). In Salmonella schwarzengrund (strain CVM19633), this protein is D-serine dehydratase.